The following is a 233-amino-acid chain: 2-C-methyl-D-erythritol 4-phosphate cytidylyltransferase (233 aa).

The protein belongs to the IspD/TarI cytidylyltransferase family. IspD subfamily.

It carries out the reaction 2-C-methyl-D-erythritol 4-phosphate + CTP + H(+) = 4-CDP-2-C-methyl-D-erythritol + diphosphate. The protein operates within isoprenoid biosynthesis; isopentenyl diphosphate biosynthesis via DXP pathway; isopentenyl diphosphate from 1-deoxy-D-xylulose 5-phosphate: step 2/6. Its function is as follows. Catalyzes the formation of 4-diphosphocytidyl-2-C-methyl-D-erythritol from CTP and 2-C-methyl-D-erythritol 4-phosphate (MEP). In Carboxydothermus hydrogenoformans (strain ATCC BAA-161 / DSM 6008 / Z-2901), this protein is 2-C-methyl-D-erythritol 4-phosphate cytidylyltransferase.